We begin with the raw amino-acid sequence, 385 residues long: Ethanolamine kinase 2 (385 aa).

It belongs to the choline/ethanolamine kinase family. Expressed in testis and liver. Low expression in ovary and kidney.

The enzyme catalyses ethanolamine + ATP = phosphoethanolamine + ADP + H(+). It participates in phospholipid metabolism; phosphatidylethanolamine biosynthesis; phosphatidylethanolamine from ethanolamine: step 1/3. Highly specific for ethanolamine phosphorylation. Does not have choline kinase activity. In Mus musculus (Mouse), this protein is Ethanolamine kinase 2 (Etnk2).